The primary structure comprises 293 residues: Elongation factor Ts (293 aa).

Positions 80–83 (TDFV) are involved in Mg(2+) ion dislocation from EF-Tu.

Belongs to the EF-Ts family.

The protein resides in the cytoplasm. Its function is as follows. Associates with the EF-Tu.GDP complex and induces the exchange of GDP to GTP. It remains bound to the aminoacyl-tRNA.EF-Tu.GTP complex up to the GTP hydrolysis stage on the ribosome. The chain is Elongation factor Ts from Burkholderia cenocepacia (strain HI2424).